The chain runs to 507 residues: ATP synthase subunit alpha, mitochondrial (507 aa).

171–178 (GDRQTGKT) lines the ATP pocket.

The protein belongs to the ATPase alpha/beta chains family. In terms of assembly, F-type ATPases have 2 components, CF(1) - the catalytic core - and CF(0) - the membrane proton channel. CF(1) has five subunits: alpha(3), beta(3), gamma(1), delta(1), epsilon(1). CF(0) has three main subunits: a, b and c.

The protein resides in the mitochondrion. The protein localises to the mitochondrion inner membrane. In terms of biological role, mitochondrial membrane ATP synthase (F(1)F(0) ATP synthase or Complex V) produces ATP from ADP in the presence of a proton gradient across the membrane which is generated by electron transport complexes of the respiratory chain. F-type ATPases consist of two structural domains, F(1) - containing the extramembraneous catalytic core, and F(0) - containing the membrane proton channel, linked together by a central stalk and a peripheral stalk. During catalysis, ATP synthesis in the catalytic domain of F(1) is coupled via a rotary mechanism of the central stalk subunits to proton translocation. Subunits alpha and beta form the catalytic core in F(1). Rotation of the central stalk against the surrounding alpha(3)beta(3) subunits leads to hydrolysis of ATP in three separate catalytic sites on the beta subunits. Subunit alpha does not bear the catalytic high-affinity ATP-binding sites. This is ATP synthase subunit alpha, mitochondrial (ATPA) from Arabidopsis thaliana (Mouse-ear cress).